A 136-amino-acid chain; its full sequence is Large ribosomal subunit protein uL16 (136 aa).

Belongs to the universal ribosomal protein uL16 family. As to quaternary structure, part of the 50S ribosomal subunit.

In terms of biological role, binds 23S rRNA and is also seen to make contacts with the A and possibly P site tRNAs. The protein is Large ribosomal subunit protein uL16 of Mesomycoplasma hyopneumoniae (strain 232) (Mycoplasma hyopneumoniae).